Consider the following 239-residue polypeptide: Fatty acid metabolism regulator protein (239 aa).

One can recognise an HTH gntR-type domain in the interval 6–74; that stretch reads QSPAGFAEEY…HGKPTKVNNF (69 aa). A DNA-binding region (H-T-H motif) is located at residues 34-53; the sequence is ERELSELIGVTRTTLREVLQ.

In terms of assembly, homodimer.

Its subcellular location is the cytoplasm. In terms of biological role, multifunctional regulator of fatty acid metabolism. The chain is Fatty acid metabolism regulator protein from Klebsiella pneumoniae subsp. pneumoniae (strain ATCC 700721 / MGH 78578).